The following is a 159-amino-acid chain: Riboflavin kinase (159 aa).

Residue 38–43 participates in CDP binding; the sequence is GLGEGR. 2 residues coordinate Mg(2+): threonine 67 and asparagine 69. FMN-binding residues include threonine 126 and glutamate 134. 139–142 is a CDP binding site; it reads HKLR.

Belongs to the archaeal riboflavin kinase family. Mg(2+) serves as cofactor.

It catalyses the reaction riboflavin + CTP = CDP + FMN + H(+). It participates in cofactor biosynthesis; FMN biosynthesis; FMN from riboflavin (CTP route): step 1/1. Its function is as follows. Catalyzes the CTP-dependent phosphorylation of riboflavin (vitamin B2) to form flavin mononucleotide (FMN). This is Riboflavin kinase from Sulfolobus acidocaldarius (strain ATCC 33909 / DSM 639 / JCM 8929 / NBRC 15157 / NCIMB 11770).